Reading from the N-terminus, the 329-residue chain is Delta(7)-sterol 5(6)-desaturase erg32 (329 aa).

The next 2 membrane-spanning stretches (helical) occupy residues 67–87 (LFLITWIMGTLSYFLSASFAY) and 149–169 (FYLFFSIALFLLFSDFLIYWI). In terms of domain architecture, Fatty acid hydroxylase spans 156 to 281 (ALFLLFSDFL…FFTLFDRLCS (126 aa)). The Histidine box-1 motif lies at 170-175 (HRALHH). The Histidine box-2 motif lies at 183 to 187 (HKLHH). The chain crosses the membrane as a helical span at residues 210–230 (LPYHMFPFFFPLNKYVYLLLF). The short motif at 257–262 (HHAAHH) is the Histidine box-3 element.

Belongs to the sterol desaturase family. The cofactor is Fe cation.

The protein localises to the endoplasmic reticulum membrane. The protein resides in the golgi apparatus membrane. It catalyses the reaction episterol + 2 Fe(II)-[cytochrome b5] + O2 + 2 H(+) = 5-dehydroepisterol + 2 Fe(III)-[cytochrome b5] + 2 H2O. It functions in the pathway steroid metabolism; ergosterol biosynthesis. Functionally, C-5 sterol desaturase; part of the third module of ergosterol biosynthesis pathway that includes by the late steps of the pathway. Erg31 and erg32 catalyze the introduction of a C-5 double bond in the B ring to produce 5-dehydroepisterol. The third module or late pathway involves the ergosterol synthesis itself through consecutive reactions that mainly occur in the endoplasmic reticulum (ER) membrane. Firstly, the squalene synthase erg9 catalyzes the condensation of 2 farnesyl pyrophosphate moieties to form squalene, which is the precursor of all steroids. Secondly, squalene is converted into lanosterol by the consecutive action of the squalene epoxidase erg1 and the lanosterol synthase erg7. The lanosterol 14-alpha-demethylase erg11/cyp1 catalyzes C14-demethylation of lanosterol to produce 4,4'-dimethyl cholesta-8,14,24-triene-3-beta-ol. In the next steps, a complex process involving various demethylation, reduction and desaturation reactions catalyzed by the C-14 reductase erg24 and the C-4 demethylation complex erg25-erg26-erg27 leads to the production of zymosterol. Erg28 likely functions in the C-4 demethylation complex reaction by tethering erg26 and Erg27 to the endoplasmic reticulum or to facilitate interaction between these proteins. Then, the sterol 24-C-methyltransferase erg6 catalyzes the methyl transfer from S-adenosyl-methionine to the C-24 of zymosterol to form fecosterol. The C-8 sterol isomerase erg2 catalyzes the reaction which results in unsaturation at C-7 in the B ring of sterols and thus converts fecosterol to episterol. The sterol-C5-desaturases erg31 and erg32 then catalyze the introduction of a C-5 double bond in the B ring to produce 5-dehydroepisterol. The C-22 sterol desaturase erg5 further converts 5-dehydroepisterol into ergosta-5,7,22,24(28)-tetraen-3beta-ol by forming the C-22(23) double bond in the sterol side chain. Finally, ergosta-5,7,22,24(28)-tetraen-3beta-ol is substrate of the C-24(28) sterol reductase erg4 to produce ergosterol. In the genus Schizosaccharomyces, a second route exists between lanosterol and fecosterol, via the methylation of lanosterol to eburicol by erg6, followed by C14-demethylation by erg11/cyp1 and C4-demethylation by the demethylation complex erg25-erg26-erg27. In Schizosaccharomyces pombe (strain 972 / ATCC 24843) (Fission yeast), this protein is Delta(7)-sterol 5(6)-desaturase erg32.